Reading from the N-terminus, the 488-residue chain is 3-octaprenyl-4-hydroxybenzoate carboxy-lyase (488 aa).

Residue Asn-172 coordinates Mn(2+). Prenylated FMN contacts are provided by residues Ile-175–Arg-177, Arg-189–Leu-191, and Arg-194–Gly-195. Position 238 (Glu-238) interacts with Mn(2+). Asp-287 functions as the Proton donor in the catalytic mechanism.

It belongs to the UbiD family. In terms of assembly, homohexamer. Requires prenylated FMN as cofactor. Mn(2+) is required as a cofactor.

It localises to the cell membrane. It carries out the reaction a 4-hydroxy-3-(all-trans-polyprenyl)benzoate + H(+) = a 2-(all-trans-polyprenyl)phenol + CO2. It participates in cofactor biosynthesis; ubiquinone biosynthesis. Functionally, catalyzes the decarboxylation of 3-octaprenyl-4-hydroxy benzoate to 2-octaprenylphenol, an intermediate step in ubiquinone biosynthesis. The sequence is that of 3-octaprenyl-4-hydroxybenzoate carboxy-lyase from Legionella pneumophila (strain Paris).